Here is a 206-residue protein sequence, read N- to C-terminus: Molybdopterin synthase catalytic subunit (206 aa).

Polar residues predominate over residues M1 to A23. Residues M1–E27 form a disordered region. Substrate contacts are provided by residues H131–R132, K147, and K154–E156. Over residues K177–V188 the composition is skewed to basic and acidic residues. The disordered stretch occupies residues K177–S206. Residues S197–S206 show a composition bias toward gly residues.

It belongs to the MoaE family. MOCS2B subfamily. As to quaternary structure, heterotetramer; composed of 2 small (MOCS2A) and 2 large (MOCS2B) subunits.

Its subcellular location is the cytoplasm. The catalysed reaction is 2 [molybdopterin-synthase sulfur-carrier protein]-C-terminal-Gly-aminoethanethioate + cyclic pyranopterin phosphate + H2O = molybdopterin + 2 [molybdopterin-synthase sulfur-carrier protein]-C-terminal Gly-Gly + 2 H(+). It functions in the pathway cofactor biosynthesis; molybdopterin biosynthesis. Its function is as follows. Catalytic subunit of the molybdopterin synthase complex, a complex that catalyzes the conversion of precursor Z into molybdopterin. Acts by mediating the incorporation of 2 sulfur atoms from thiocarboxylated MOCS2A into precursor Z to generate a dithiolene group. The chain is Molybdopterin synthase catalytic subunit (nit-8) from Neurospora crassa (strain ATCC 24698 / 74-OR23-1A / CBS 708.71 / DSM 1257 / FGSC 987).